The following is a 307-amino-acid chain: Acetyl-coenzyme A carboxylase carboxyl transferase subunit beta (307 aa).

One can recognise a CoA carboxyltransferase N-terminal domain in the interval 28 to 297 (LWVKCPDTGQ…TPEPGTAPEP (270 aa)). The segment at 286 to 307 (RRTPEPGTAPEPTTPEPLPNAA) is disordered. Pro residues predominate over residues 292 to 307 (GTAPEPTTPEPLPNAA).

It belongs to the AccD/PCCB family. Acetyl-CoA carboxylase is a heterohexamer composed of biotin carboxyl carrier protein (AccB), biotin carboxylase (AccC) and two subunits each of ACCase subunit alpha (AccA) and ACCase subunit beta (AccD).

It localises to the cytoplasm. It carries out the reaction N(6)-carboxybiotinyl-L-lysyl-[protein] + acetyl-CoA = N(6)-biotinyl-L-lysyl-[protein] + malonyl-CoA. The protein operates within lipid metabolism; malonyl-CoA biosynthesis; malonyl-CoA from acetyl-CoA: step 1/1. Functionally, component of the acetyl coenzyme A carboxylase (ACC) complex. Biotin carboxylase (BC) catalyzes the carboxylation of biotin on its carrier protein (BCCP) and then the CO(2) group is transferred by the transcarboxylase to acetyl-CoA to form malonyl-CoA. The polypeptide is Acetyl-coenzyme A carboxylase carboxyl transferase subunit beta (Methylorubrum extorquens (strain ATCC 14718 / DSM 1338 / JCM 2805 / NCIMB 9133 / AM1) (Methylobacterium extorquens)).